The sequence spans 310 residues: MTVTVKMLVQKVKLDVVYATDNLLSKEITTSDISRPGLEMTGYFDYYAPERLQLFGMKEWSYLTQMTSHNRYSVLKEMFKKDTPAVVVSRNLAIPKEMVQAAKEEGISLLSSRVSTSRLAGEMSYFLDASLAERTSVHGVLMDIYGMGVLIQGDSGIGKSETGLELVKRGHRLVADDRVDVYAKDEETLWGEPAEILRHLLEIRGVGIIDVMSLYGASAVKDSSQVQLAIYLENFEAGKVFDRLGNGNEEITFSGVRIPRIRIPVKTGRNVSVVIEAAAMNHRAKEMGFDATKTFEDRLTQLITKNEVSQ.

Residues histidine 138 and lysine 159 contribute to the active site. An ATP-binding site is contributed by 153 to 160 (GDSGIGKS). Serine 160 lines the Mg(2+) pocket. Residue aspartate 177 is the Proton acceptor; for phosphorylation activity. Proton donor; for dephosphorylation activity of the active site. The segment at 201-210 (LEIRGVGIID) is important for the catalytic mechanism of both phosphorylation and dephosphorylation. Glutamate 202 is a binding site for Mg(2+). Residue arginine 243 is part of the active site. The segment at 264-269 (PVKTGR) is important for the catalytic mechanism of dephosphorylation.

Belongs to the HPrK/P family. As to quaternary structure, homohexamer. It depends on Mg(2+) as a cofactor.

The catalysed reaction is [HPr protein]-L-serine + ATP = [HPr protein]-O-phospho-L-serine + ADP + H(+). It catalyses the reaction [HPr protein]-O-phospho-L-serine + phosphate + H(+) = [HPr protein]-L-serine + diphosphate. Functionally, catalyzes the ATP- as well as the pyrophosphate-dependent phosphorylation of a specific serine residue in HPr, a phosphocarrier protein of the phosphoenolpyruvate-dependent sugar phosphotransferase system (PTS). HprK/P also catalyzes the pyrophosphate-producing, inorganic phosphate-dependent dephosphorylation (phosphorolysis) of seryl-phosphorylated HPr (P-Ser-HPr). The two antagonistic activities of HprK/P are regulated by several intracellular metabolites, which change their concentration in response to the absence or presence of rapidly metabolisable carbon sources (glucose, fructose, etc.) in the growth medium. Therefore, by controlling the phosphorylation state of HPr, HPrK/P is a sensor enzyme that plays a major role in the regulation of carbon metabolism and sugar transport: it mediates carbon catabolite repression (CCR), and regulates PTS-catalyzed carbohydrate uptake and inducer exclusion. The chain is HPr kinase/phosphorylase (hprK) from Streptococcus pyogenes serotype M1.